A 382-amino-acid chain; its full sequence is Mannitol-1-phosphate 5-dehydrogenase (382 aa).

Ala3 to Gly14 provides a ligand contact to NAD(+).

It belongs to the mannitol dehydrogenase family.

The catalysed reaction is D-mannitol 1-phosphate + NAD(+) = beta-D-fructose 6-phosphate + NADH + H(+). This chain is Mannitol-1-phosphate 5-dehydrogenase, found in Salmonella newport (strain SL254).